The following is a 107-amino-acid chain: Transcriptional regulator Rv3488 (107 aa).

Cd(2+)-binding residues include His16, Glu30, His34, and His101.

As to quaternary structure, homodimer.

Its function is as follows. May have transcription regulation and metal-detoxifying functions through which it may enhance intracellular survival of mycobacteria. Binds to its own promoter region and to the Rv1999c promoter region. It displays strong affinity for cadmium ions, but can also bind zinc, manganese and nickel. Expression increases the intracellular survival of recombinant M.smegmatis in murine macrophage cell line and increases its tolerance to cadmium ions. In Mycobacterium tuberculosis (strain ATCC 25618 / H37Rv), this protein is Transcriptional regulator Rv3488.